The following is a 467-amino-acid chain: Nodulation protein T (467 aa).

The N-terminal stretch at 1-17 (MRFTRYTTPFFSLLLSG) is a signal peptide. Cysteine 18 is lipidated: N-palmitoyl cysteine. A lipid anchor (S-diacylglycerol cysteine) is attached at cysteine 18.

This sequence belongs to the outer membrane factor (OMF) (TC 1.B.17) family.

The protein resides in the cell membrane. This Rhizobium leguminosarum bv. trifolii protein is Nodulation protein T (nodT).